The primary structure comprises 230 residues: MDLKYLNQKEAIAVDQELFNDYKFSVDQLMELAGLSCAHAVAKCFPAEKHPRILVCCGPGNNGGDGLVAARHLALMGYTPTIYYPKPTAKPLFENLSHQCQQMDICDVKECPSVESAARDYDLILDALFGFSFKPPVRADFVAVVELMQQTKLPIASVDIPSGWDVEKGKLTECDVEPALLISLTAPKLCARQFRGEHHYLGGRFVPPALQRKYELNLPVYPGNELCVKL.

Positions 11 to 218 (AIAVDQELFN…ALQRKYELNL (208 aa)) constitute a YjeF N-terminal domain. Residue 61-65 (NNGGD) participates in (6S)-NADPHX binding. The K(+) site is built by N62 and D126. Residues 130–136 (GFSFKPP) and D159 each bind (6S)-NADPHX. Position 162 (S162) interacts with K(+).

The protein belongs to the NnrE/AIBP family. K(+) is required as a cofactor.

It catalyses the reaction (6R)-NADHX = (6S)-NADHX. The enzyme catalyses (6R)-NADPHX = (6S)-NADPHX. Functionally, catalyzes the epimerization of the S- and R-forms of NAD(P)HX, a damaged form of NAD(P)H that is a result of enzymatic or heat-dependent hydration. This is a prerequisite for the S-specific NAD(P)H-hydrate dehydratase to allow the repair of both epimers of NAD(P)HX. In Drosophila melanogaster (Fruit fly), this protein is NAD(P)H-hydrate epimerase.